A 181-amino-acid chain; its full sequence is Protein Syd (181 aa).

The protein belongs to the Syd family.

The protein resides in the cell inner membrane. Functionally, interacts with the SecY protein in vivo. May bind preferentially to an uncomplexed state of SecY, thus functioning either as a chelating agent for excess SecY in the cell or as a regulatory factor that negatively controls the translocase function. The polypeptide is Protein Syd (Escherichia coli O157:H7).